A 328-amino-acid polypeptide reads, in one-letter code: D-cysteine desulfhydrase (328 aa).

K51 bears the N6-(pyridoxal phosphate)lysine mark.

It belongs to the ACC deaminase/D-cysteine desulfhydrase family. Homodimer. It depends on pyridoxal 5'-phosphate as a cofactor.

It catalyses the reaction D-cysteine + H2O = hydrogen sulfide + pyruvate + NH4(+) + H(+). Functionally, catalyzes the alpha,beta-elimination reaction of D-cysteine and of several D-cysteine derivatives. It could be a defense mechanism against D-cysteine. The chain is D-cysteine desulfhydrase from Salmonella typhimurium (strain LT2 / SGSC1412 / ATCC 700720).